The sequence spans 147 residues: UPF0306 protein YhbP (147 aa).

The protein belongs to the UPF0306 family.

This is UPF0306 protein YhbP from Escherichia coli O17:K52:H18 (strain UMN026 / ExPEC).